The sequence spans 514 residues: Na(+)/H(+) antiporter NhaB (514 aa).

The next 12 helical transmembrane spans lie at 23–43, 63–83, 97–117, 120–140, 144–164, 202–222, 238–258, 303–323, 357–377, 391–411, 447–467, and 475–495; these read LALIAFLIANPLIFFINPFVA, PLLPGGLLAIEAVIIGMTSAA, LLLMFMVAGIYFMKQLLLFIF, LLLSIRSKMLLSLAFCMAAAF, FLDALTVVAVVISVAVGFYGI, LMMHAGVGTALGGVMTMVGEP, FFLRMSPVTVPVLICGLFTCV, AIIGVWLVTALALHLAEVGLI, LTVFFSIVAVIIDQHLFAPII, LFYLFNGLLSSISDNVFVGTI, ATPNGQAAFLFLLTSALAPLI, and VWMALPYTLVLTLVGLLCVEF.

Belongs to the NhaB Na(+)/H(+) (TC 2.A.34) antiporter family.

Its subcellular location is the cell inner membrane. It catalyses the reaction 2 Na(+)(in) + 3 H(+)(out) = 2 Na(+)(out) + 3 H(+)(in). Functionally, na(+)/H(+) antiporter that extrudes sodium in exchange for external protons. The polypeptide is Na(+)/H(+) antiporter NhaB (Citrobacter koseri (strain ATCC BAA-895 / CDC 4225-83 / SGSC4696)).